The chain runs to 126 residues: Large ribosomal subunit protein bL12 (126 aa).

This sequence belongs to the bacterial ribosomal protein bL12 family. In terms of assembly, homodimer. Part of the ribosomal stalk of the 50S ribosomal subunit. Forms a multimeric L10(L12)X complex, where L10 forms an elongated spine to which 2 to 4 L12 dimers bind in a sequential fashion. Binds GTP-bound translation factors.

In terms of biological role, forms part of the ribosomal stalk which helps the ribosome interact with GTP-bound translation factors. Is thus essential for accurate translation. The chain is Large ribosomal subunit protein bL12 from Caulobacter sp. (strain K31).